We begin with the raw amino-acid sequence, 219 residues long: 2-hydroxy-3-keto-5-methylthiopentenyl-1-phosphate phosphatase (219 aa).

Belongs to the HAD-like hydrolase superfamily. MtnX family.

The enzyme catalyses 2-hydroxy-5-methylsulfanyl-3-oxopent-1-enyl phosphate + H2O = 1,2-dihydroxy-5-(methylsulfanyl)pent-1-en-3-one + phosphate. The protein operates within amino-acid biosynthesis; L-methionine biosynthesis via salvage pathway; L-methionine from S-methyl-5-thio-alpha-D-ribose 1-phosphate: step 4/6. Its function is as follows. Dephosphorylates 2-hydroxy-3-keto-5-methylthiopentenyl-1-phosphate (HK-MTPenyl-1-P) yielding 1,2-dihydroxy-3-keto-5-methylthiopentene (DHK-MTPene). This chain is 2-hydroxy-3-keto-5-methylthiopentenyl-1-phosphate phosphatase, found in Bacillus cytotoxicus (strain DSM 22905 / CIP 110041 / 391-98 / NVH 391-98).